The chain runs to 333 residues: Gap junction alpha-4 protein (333 aa).

The Cytoplasmic portion of the chain corresponds to 1–20 (MGDWGFLEKLLDQVQEHSTV). The helical transmembrane segment at 21-40 (VGKIWLTVLFIFRILILGLA) threads the bilayer. Topologically, residues 41–76 (GESVWGDEQSDFECNTAQPGCTNVCYDQAFPISHIR) are extracellular. A helical membrane pass occupies residues 77 to 99 (YWVLQFLFVSTPTLVYLGHVIYL). Residues 100–148 (SRREERLRQKEGELRALPAKDPRVERALASIERQMAKISVAEDGHLRIR) lie on the Cytoplasmic side of the membrane. Residues 149 to 165 (GALMGTYVASVLCKSVL) form a helical membrane-spanning segment. At 166 to 207 (EAGFLYGQWRLYGWTMEPVFVCQRSPCPYLVDCFVSRPTEKT) the chain is on the extracellular side. Residues 208-230 (IFIIFMLVVGLISLVLNLLELAY) form a helical membrane-spanning segment. Over 231–333 (LLCRCLSRGV…SSSASKKQYV (103 aa)) the chain is Cytoplasmic. The tract at residues 303 to 333 (SRAPLFLDPPPQTGRKSPSRPSSSASKKQYV) is disordered. The span at 317–333 (RKSPSRPSSSASKKQYV) shows a compositional bias: low complexity.

The protein belongs to the connexin family. Alpha-type (group II) subfamily. A connexon is composed of a hexamer of connexins.

The protein localises to the cell membrane. It localises to the cell junction. The protein resides in the gap junction. One gap junction consists of a cluster of closely packed pairs of transmembrane channels, the connexons, through which materials of low MW diffuse from one cell to a neighboring cell. This is Gap junction alpha-4 protein (GJA4) from Bos taurus (Bovine).